A 70-amino-acid chain; its full sequence is Protein SlyX homolog (70 aa).

It belongs to the SlyX family.

The polypeptide is Protein SlyX homolog (Rhizobium meliloti (strain 1021) (Ensifer meliloti)).